The sequence spans 253 residues: Chloride intracellular channel protein 4 (253 aa).

A2 carries the N-acetylalanine modification. The tract at residues A2–P101 is required for insertion into the membrane. S4 is subject to Phosphoserine. K24 is subject to N6-acetyllysine. The G-site signature appears at C35–S38. A helical membrane pass occupies residues F37 to V57. In terms of domain architecture, GST C-terminal spans N81–Y244. An N6-acetyllysine modification is found at K130. A phosphoserine mark is found at S132, S167, and S236. Phosphotyrosine is present on Y244.

It belongs to the chloride channel CLIC family. In terms of assembly, monomer. Interacts with HRH3. As to expression, detected in brain, in cell bodies and dendrites of Purkinje cells in cerebellar neurons (at protein level). Expressed neonatal and adult cardiomyocytes (at protein level). Marked expression was found in hippocampus and cerebellum, and in many other tissues.

Its subcellular location is the cytoplasm. The protein localises to the cytoskeleton. The protein resides in the microtubule organizing center. It is found in the centrosome. It localises to the cytoplasmic vesicle membrane. Its subcellular location is the nucleus. The protein localises to the cell membrane. The protein resides in the mitochondrion. It is found in the cell junction. It localises to the endoplasmic reticulum membrane. It catalyses the reaction chloride(in) = chloride(out). The enzyme catalyses thiocyanate(in) = thiocyanate(out). It carries out the reaction nitrate(in) = nitrate(out). The catalysed reaction is iodide(out) = iodide(in). It catalyses the reaction bromide(in) = bromide(out). The enzyme catalyses fluoride(in) = fluoride(out). It carries out the reaction choline(out) = choline(in). With respect to regulation, channel activity is redox- and pH-regulated. Anion vs cation selectivity is enhanced when fully oxidized. Its function is as follows. In the soluble state, catalyzes glutaredoxin-like thiol disulfide exchange reactions with reduced glutathione as electron donor. Can insert into membranes and form voltage-dependent multi-ion conductive channels. Membrane insertion seems to be redox-regulated and may occur only under oxidizing conditions. Has alternate cellular functions like a potential role in angiogenesis or in maintaining apical-basolateral membrane polarity during mitosis and cytokinesis. Could also promote endothelial cell proliferation and regulate endothelial morphogenesis (tubulogenesis). Promotes cell-surface expression of HRH3. The protein is Chloride intracellular channel protein 4 (Clic4) of Rattus norvegicus (Rat).